The sequence spans 826 residues: Ribonucleases P/MRP protein subunit POP1 (826 aa).

Disordered stretches follow at residues 1-24 (MATT…PRKI) and 49-91 (NKDF…SGGD). Positions 58 to 65 (KRRRTNSY) match the Nuclear localization signal motif. Over residues 70–79 (AKKRNIKRQK) the composition is skewed to basic residues.

As to quaternary structure, component of nuclear RNase P and RNase MRP ribonucleoproteins. RNase P consists of a catalytic RNA moiety and different protein chains. Several subunits of RNase P are also part of the RNase MRP complex. RNase MRP consists of a catalytic RNA moiety and several protein subunits.

It is found in the nucleus. Its subcellular location is the nucleolus. In terms of biological role, component of ribonuclease P, a ribonucleoprotein complex that generates mature tRNA molecules by cleaving their 5'-ends. Also a component of the MRP ribonuclease complex, which cleaves pre-rRNA sequences. Required for rRNA maturation, including 5.8S rRNA processing. The chain is Ribonucleases P/MRP protein subunit POP1 from Arabidopsis thaliana (Mouse-ear cress).